The primary structure comprises 334 residues: MRLLSLLTFSLFAVIGLAPAAQAKDTLTIYTYDSFVSEWGPGPKVKENFEKECDCEVNFVASADGVALLNRLKLEGSKTAADIVLGLDTNLTTEARASGFFAPSGIDQTNVKVPGNFKDDIFVPYDYGYFAVVYDSEKLPNPPKSLKELVEGDPAQKIVLQDPRTATPGLGMLLWMKSVYGDEAGAAWQKLQKRVLTVTPGWSEAYGLFTKGESPMVLSYTTSPAYHMVVEKTDRYKALAYPEGNYLQIELAAQTTTGAKNPLAKKFLAFMTGPGFQDVIPETNWMFPAGKTSKPLPAAFDALPKPEKTLLIPPYEVAKNRRLWVNEWLAATSR.

Residues 1–23 (MRLLSLLTFSLFAVIGLAPAAQA) form the signal peptide. Residues 64–65 (DG), 166–167 (AT), W202, and 220–223 (YTTS) contribute to the thiamine site.

It belongs to the bacterial solute-binding protein 1 family. In terms of assembly, the complex is composed of two ATP-binding proteins (ThiQ), two transmembrane proteins (ThiP) and a solute-binding protein (ThiB).

The protein resides in the periplasm. In terms of biological role, part of the ABC transporter complex ThiBPQ involved in thiamine import. This Brucella suis biovar 1 (strain 1330) protein is Thiamine-binding periplasmic protein (thiB).